The sequence spans 308 residues: Phosphoribosylaminoimidazole-succinocarboxamide synthase (308 aa).

The protein belongs to the SAICAR synthetase family.

The catalysed reaction is 5-amino-1-(5-phospho-D-ribosyl)imidazole-4-carboxylate + L-aspartate + ATP = (2S)-2-[5-amino-1-(5-phospho-beta-D-ribosyl)imidazole-4-carboxamido]succinate + ADP + phosphate + 2 H(+). It functions in the pathway purine metabolism; IMP biosynthesis via de novo pathway; 5-amino-1-(5-phospho-D-ribosyl)imidazole-4-carboxamide from 5-amino-1-(5-phospho-D-ribosyl)imidazole-4-carboxylate: step 1/2. This is Phosphoribosylaminoimidazole-succinocarboxamide synthase from Xanthomonas euvesicatoria pv. vesicatoria (strain 85-10) (Xanthomonas campestris pv. vesicatoria).